A 196-amino-acid polypeptide reads, in one-letter code: CRISPR-associated exonuclease Cas4 (196 aa).

[4Fe-4S] cluster is bound at residue Cys23. Positions 50, 90, and 103 each coordinate Mn(2+). Residues Cys184, Cys187, and Cys193 each coordinate [4Fe-4S] cluster.

Belongs to the CRISPR-associated exonuclease Cas4 family. It depends on Mg(2+) as a cofactor. The cofactor is [4Fe-4S] cluster.

It carries out the reaction exonucleolytic cleavage in the 5'- to 3'-direction to yield nucleoside 3'-phosphates.. Functionally, CRISPR (clustered regularly interspaced short palindromic repeat) is an adaptive immune system that provides protection against mobile genetic elements (viruses, transposable elements and conjugative plasmids). CRISPR clusters contain sequences complementary to antecedent mobile elements and target invading nucleic acids. CRISPR clusters are transcribed and processed into CRISPR RNA (crRNA). This may be a 5' to 3' ssDNA exonuclease. The polypeptide is CRISPR-associated exonuclease Cas4 (Francisella tularensis subsp. novicida (strain U112)).